Here is a 434-residue protein sequence, read N- to C-terminus: 3-phosphoshikimate 1-carboxyvinyltransferase (434 aa).

The 3-phosphoshikimate site is built by K22, S23, and R27. Phosphoenolpyruvate is bound at residue K22. Phosphoenolpyruvate contacts are provided by G93 and R121. 3-phosphoshikimate contacts are provided by S168, S169, Q170, S199, D320, and K347. A phosphoenolpyruvate-binding site is contributed by Q170. D320 acts as the Proton acceptor in catalysis. Positions 351, 394, and 419 each coordinate phosphoenolpyruvate.

Belongs to the EPSP synthase family. In terms of assembly, monomer.

It is found in the cytoplasm. The catalysed reaction is 3-phosphoshikimate + phosphoenolpyruvate = 5-O-(1-carboxyvinyl)-3-phosphoshikimate + phosphate. It functions in the pathway metabolic intermediate biosynthesis; chorismate biosynthesis; chorismate from D-erythrose 4-phosphate and phosphoenolpyruvate: step 6/7. Functionally, catalyzes the transfer of the enolpyruvyl moiety of phosphoenolpyruvate (PEP) to the 5-hydroxyl of shikimate-3-phosphate (S3P) to produce enolpyruvyl shikimate-3-phosphate and inorganic phosphate. The protein is 3-phosphoshikimate 1-carboxyvinyltransferase of Burkholderia cenocepacia (strain ATCC BAA-245 / DSM 16553 / LMG 16656 / NCTC 13227 / J2315 / CF5610) (Burkholderia cepacia (strain J2315)).